The chain runs to 240 residues: Membrane-spanning 4-domains subfamily A member 15 (240 aa).

4 helical membrane passes run 73–93, 100–120, 144–164, and 173–193; these read VLGT…SVLL, VGIF…FIIS, ILSV…FGVT, and LAVL…AMHF.

It belongs to the MS4A family.

It is found in the membrane. Its function is as follows. May be involved in signal transduction as a component of a multimeric receptor complex. This is Membrane-spanning 4-domains subfamily A member 15 (MS4A15) from Homo sapiens (Human).